We begin with the raw amino-acid sequence, 485 residues long: Glutamyl-tRNA(Gln) amidotransferase subunit A (485 aa).

Catalysis depends on charge relay system residues lysine 78 and serine 153. Residue serine 177 is the Acyl-ester intermediate of the active site.

The protein belongs to the amidase family. GatA subfamily. Heterotrimer of A, B and C subunits.

It carries out the reaction L-glutamyl-tRNA(Gln) + L-glutamine + ATP + H2O = L-glutaminyl-tRNA(Gln) + L-glutamate + ADP + phosphate + H(+). Functionally, allows the formation of correctly charged Gln-tRNA(Gln) through the transamidation of misacylated Glu-tRNA(Gln) in organisms which lack glutaminyl-tRNA synthetase. The reaction takes place in the presence of glutamine and ATP through an activated gamma-phospho-Glu-tRNA(Gln). The polypeptide is Glutamyl-tRNA(Gln) amidotransferase subunit A (Lawsonia intracellularis (strain PHE/MN1-00)).